Here is a 288-residue protein sequence, read N- to C-terminus: Thymidylate synthase (288 aa).

R21 contributes to the dUMP binding site. N51 is a (6R)-5,10-methylene-5,6,7,8-tetrahydrofolate binding site. 150–151 (RR) is a dUMP binding site. C170 serves as the catalytic Nucleophile. Residues 190 to 193 (RSGD), N201, and 231 to 233 (HIY) each bind dUMP. D193 contacts (6R)-5,10-methylene-5,6,7,8-tetrahydrofolate. A (6R)-5,10-methylene-5,6,7,8-tetrahydrofolate-binding site is contributed by A287.

This sequence belongs to the thymidylate synthase family. Bacterial-type ThyA subfamily. In terms of assembly, homodimer.

The protein localises to the cytoplasm. The catalysed reaction is dUMP + (6R)-5,10-methylene-5,6,7,8-tetrahydrofolate = 7,8-dihydrofolate + dTMP. It participates in pyrimidine metabolism; dTTP biosynthesis. Functionally, catalyzes the reductive methylation of 2'-deoxyuridine-5'-monophosphate (dUMP) to 2'-deoxythymidine-5'-monophosphate (dTMP) while utilizing 5,10-methylenetetrahydrofolate (mTHF) as the methyl donor and reductant in the reaction, yielding dihydrofolate (DHF) as a by-product. This enzymatic reaction provides an intracellular de novo source of dTMP, an essential precursor for DNA biosynthesis. This chain is Thymidylate synthase, found in Phytoplasma mali (strain AT).